The following is a 546-amino-acid chain: Chaperonin GroEL 4 (546 aa).

ATP contacts are provided by residues 30–33 (TLGP), lysine 51, 87–91 (DGTTT), glycine 415, and aspartate 495. The interval 524-546 (APKDTPAAGQPGGPGAGGPGLDF) is disordered. Over residues 533 to 546 (QPGGPGAGGPGLDF) the composition is skewed to gly residues.

This sequence belongs to the chaperonin (HSP60) family. As to quaternary structure, forms a cylinder of 14 subunits composed of two heptameric rings stacked back-to-back. Interacts with the co-chaperonin GroES.

Its subcellular location is the cytoplasm. The catalysed reaction is ATP + H2O + a folded polypeptide = ADP + phosphate + an unfolded polypeptide.. Together with its co-chaperonin GroES, plays an essential role in assisting protein folding. The GroEL-GroES system forms a nano-cage that allows encapsulation of the non-native substrate proteins and provides a physical environment optimized to promote and accelerate protein folding. This chain is Chaperonin GroEL 4, found in Paraburkholderia xenovorans (strain LB400).